A 389-amino-acid chain; its full sequence is Gastricsin (389 aa).

Positions 1–16 are cleaved as a signal peptide; the sequence is MKWMVVALVCLQLLEA. The propeptide at 17 to 59 is activation peptide; sequence KVTKVTLKKFKSIRENLREQGLLEDFLKTNHYDPAQKYHFGDF. Positions 73 to 386 constitute a Peptidase A1 domain; it reads YFGEISIGTP…DMGNNRVGFA (314 aa). Asp91 is an active-site residue. Cystine bridges form between Cys104/Cys109 and Cys268/Cys272. Residue Asp277 is part of the active site. Cys311 and Cys344 are joined by a disulfide.

This sequence belongs to the peptidase A1 family.

Its subcellular location is the secreted. It carries out the reaction More restricted specificity than pepsin A, but shows preferential cleavage at Tyr-|-Xaa bonds. High activity on hemoglobin.. In terms of biological role, hydrolyzes a variety of proteins. The protein is Gastricsin (PGC) of Suncus murinus (Asian house shrew).